The primary structure comprises 167 residues: Ion-translocating oxidoreductase complex subunit B (167 aa).

The segment at 1–22 (MITLIIFSFLSFLLGIILSFTA) is hydrophobic. The 4Fe-4S domain occupies 28–87 (QEDPIVAIVNELLPQSQCAQCGYSGCYPYAKAIVENSEKINKCIPGGTDLISAISSVLSI). Residues Cys-45, Cys-48, Cys-53, Cys-70, Cys-113, Cys-116, Cys-119, Cys-123, Cys-143, Cys-146, Cys-149, and Cys-153 each contribute to the [4Fe-4S] cluster site. 4Fe-4S ferredoxin-type domains lie at 104 to 133 (NTVL…GAPN) and 134 to 163 (FIHT…IKKE).

It belongs to the 4Fe4S bacterial-type ferredoxin family. RnfB subfamily. As to quaternary structure, the complex is composed of six subunits: RnfA, RnfB, RnfC, RnfD, RnfE and RnfG. [4Fe-4S] cluster serves as cofactor.

It is found in the cell inner membrane. In terms of biological role, part of a membrane-bound complex that couples electron transfer with translocation of ions across the membrane. This chain is Ion-translocating oxidoreductase complex subunit B, found in Buchnera aphidicola subsp. Acyrthosiphon pisum (strain 5A).